We begin with the raw amino-acid sequence, 400 residues long: S-adenosylmethionine sensor upstream of mTORC1 (400 aa).

S-adenosyl-L-methionine-binding residues include Arg-99, Gly-168, Asp-186, Asp-198, Phe-199, and Ser-240.

It belongs to the BMT2/SAMTOR family. As to quaternary structure, interacts with the GATOR1 complex; interaction is disrupted when samtor binds S-adenosyl-L-methionine. Interacts with the KICSTOR complex; interaction is disrupted when samtor binds S-adenosyl-L-methionine.

Functionally, S-adenosyl-L-methionine-binding protein that acts as an inhibitor of mTORC1 signaling via interaction with the GATOR1 and KICSTOR complexes. Acts as a sensor of S-adenosyl-L-methionine to signal methionine sufficiency to mTORC1: in presence of methionine, binds S-adenosyl-L-methionine, leading to disrupt interaction with the GATOR1 and KICSTOR complexes and promote mTORC1 signaling. Upon methionine starvation, S-adenosyl-L-methionine levels are reduced, thereby promoting the association with GATOR1 and KICSTOR, leading to inhibit mTORC1 signaling. Probably also acts as a S-adenosyl-L-methionine-dependent methyltransferase. This Xenopus tropicalis (Western clawed frog) protein is S-adenosylmethionine sensor upstream of mTORC1.